We begin with the raw amino-acid sequence, 240 residues long: Protein unc-119 homolog A (240 aa).

Positions 1–12 (MKVKKGGGGTGP) are enriched in gly residues. The interval 1 to 62 (MKVKKGGGGT…PLQGKQPIGP (62 aa)) is disordered. Phosphoserine; by CK2 occurs at positions 37, 39, and 41. Tyr-131 contacts tetradecanoate.

This sequence belongs to the PDE6D/unc-119 family. As to quaternary structure, interacts with CABP4; in the absence of calcium. May interact with GTP-bound ARL1. Interacts with ARL2 and ARL3 (GTP-bound forms); this promotes the release of myristoylated cargo proteins. Found in a complex with ARL3, RP2 and UNC119; RP2 induces hydrolysis of GTP ARL3 in the complex, leading to the release of UNC119. Interacts with NPHP3 (when myristoylated). Interacts with CYS1 (when myristoylated). Interacts with MACIR; interaction only takes place when UNC119 is not liganded with myristoylated proteins. Interacts with ARL1 and ARL3 GTP-bound forms. Interacts with ARL2. Interacts with ARL2. Interacts with LCK; this interaction plays a crucial role in activation of LCK. Interacts with FYN. Interacts with RAB11A; in a cell cycle-dependent manner. Interacts with LYN (via SH2 and SH3 domains); leading to LYN activation. Interacts with DNM1; leading to a decrease of DNM1 GTPase activity. Found in a complex with ABL1, ABL2, CRK and UNC119; leading to the inhibition of CRK phosphorylation by ABL kinases. Interacts with CD44. Interacts with KLHL18 (via kelch repeats). Interacts with PPP3CA, PPP3CB and PPP3CC. Interacts with USP48; this interaction promotes UNC119 stability. Post-translationally, phosphorylation suppresses its interaction with KLHL18 and down-regulates its KLHL18-mediated degradation. Phosphorylated more under light conditions than dark conditions. Dephosphorylated by calcineurin.

The protein localises to the cytoplasm. It localises to the cytoskeleton. The protein resides in the microtubule organizing center. Its subcellular location is the centrosome. It is found in the spindle. The protein localises to the spindle pole. In terms of biological role, involved in synaptic functions in photoreceptor cells, the signal transduction in immune cells as a Src family kinase activator, endosome recycling, the uptake of bacteria and endocytosis, protein trafficking in sensory neurons and as lipid-binding chaperone with specificity for a diverse subset of myristoylated proteins. Specifically binds the myristoyl moiety of a subset of N-terminally myristoylated proteins and is required for their localization. Binds myristoylated GNAT1 and is required for G-protein localization and trafficking in sensory neurons. Probably plays a role in trafficking proteins in photoreceptor cells. Plays important roles in mediating Src family kinase signals for the completion of cytokinesis via RAB11A. This Rattus norvegicus (Rat) protein is Protein unc-119 homolog A (Unc119).